The chain runs to 689 residues: Solute carrier family 22 member 23 (689 aa).

Disordered regions lie at residues 1-55 (MAID…PLPA) and 162-188 (TASW…GKGN). Asn24 carries N-linked (GlcNAc...) asparagine glycosylation. The segment covering 165–177 (WGTTSNRSNSSDT) has biased composition (polar residues). Helical transmembrane passes span 229–249 (FSLL…ADWV) and 253–273 (PVLL…ALSV). The N-linked (GlcNAc...) asparagine glycan is linked to Asn274. 8 helical membrane passes run 283 to 303 (FFEG…RIEL), 310 to 330 (FIIT…MPGL), 339 to 359 (VLQA…SIFP), 462 to 482 (ADYY…CLVV), 489 to 509 (GGLL…LGLL), 541 to 561 (IAFS…SVFF), 572 to 592 (CGGL…APII), and 601 to 621 (FLHH…ILLL).

It belongs to the major facilitator (TC 2.A.1) superfamily. Organic cation transporter (TC 2.A.1.19) family. In terms of tissue distribution, expressed in many tissues, including brain, spinal cord, kidney, liver, eye, adipose tissue, lung, epididymis, adrenal gland, pineal gland, skeletal muscle, heart, spleen, thymus, ovary, uterus, testis and epididymis.

Its subcellular location is the membrane. The sequence is that of Solute carrier family 22 member 23 (Slc22a23) from Rattus norvegicus (Rat).